Reading from the N-terminus, the 300-residue chain is Probable phytol kinase, chloroplastic (300 aa).

The N-terminal 36 residues, 1–36, are a transit peptide targeting the chloroplast; that stretch reads MAAARPALPSSPTSLLLARSTSAPDLAARRPRRWLV. Helical transmembrane passes span 60 to 78, 98 to 118, 122 to 142, 168 to 188, 227 to 247, 254 to 274, and 276 to 296; these read LLRD…YSLV, VVHV…SNST, FFAA…GLGF, YVIV…IGIV, FISG…LGYI, ALGK…IPVT, and VVDD…LLFG.

The protein belongs to the polyprenol kinase family.

It localises to the plastid. It is found in the chloroplast membrane. The enzyme catalyses phytol + CTP = phytyl phosphate + CDP + H(+). It functions in the pathway cofactor biosynthesis; tocopherol biosynthesis. Involved in the activation and reutilization of phytol from chlorophyll degradation in plant metabolism, including tocopherol biosynthesis. Catalyzes the conversion of phytol to phytol monophosphate (PMP). This chain is Probable phytol kinase, chloroplastic, found in Triticum aestivum (Wheat).